Here is a 1227-residue protein sequence, read N- to C-terminus: DNA-directed RNA polymerase subunit beta (1227 aa).

Belongs to the RNA polymerase beta chain family. As to quaternary structure, the RNAP catalytic core consists of 2 alpha, 1 beta, 1 beta' and 1 omega subunit. When a sigma factor is associated with the core the holoenzyme is formed, which can initiate transcription.

It catalyses the reaction RNA(n) + a ribonucleoside 5'-triphosphate = RNA(n+1) + diphosphate. Its function is as follows. DNA-dependent RNA polymerase catalyzes the transcription of DNA into RNA using the four ribonucleoside triphosphates as substrates. The chain is DNA-directed RNA polymerase subunit beta from Chloroflexus aggregans (strain MD-66 / DSM 9485).